The following is a 77-amino-acid chain: Protein IDA (77 aa).

The N-terminal stretch at 1–26 (MAPCRTMMVLLCFVLFLAASSSCVAA) is a signal peptide. An RLK5-binding region spans residues 56-69 (GVPIPPSAPSKRHN).

In terms of assembly, interaction with RLK5. As to expression, expressed specifically in the floral abscission zone.

The protein localises to the secreted. It localises to the extracellular space. Involved in an ethylene-independent separation step of floral abscission. Promotes abscission zone (AZ) cells rounding. May act with RLK5 and HSL2 as ligand-receptor pairs. This Arabidopsis thaliana (Mouse-ear cress) protein is Protein IDA.